The chain runs to 318 residues: MSVVVYAPASIGNVSVGFDVLGAAVSPIDGSLLGDRVLVESGSDAFTLATSGRFVDKLPENPQDNIVYDCWKVFARELETKNVTLKPIHMVLEKNMPIGSGLGSSACSIVAALDALNQFHDKPLTEMELLALMGEMEGQISGGIHYDNVAPCYLGGLQLMVEELGIISQEVPCFDEWYWVMAYPGIKVSTAEAREILPSQYRRQDVIAHGRNLAGFIHACYSKQPELAAKMIKDVVAEPYRERLLPNFAQARAYAASAGALTTGISGSGPTLFSICKDKDIAERVSRWLQDNYVQNDEGFVHVCRLDKQGSQVTGSKL.

An ATP-binding site is contributed by 97–107; it reads PIGSGLGSSAC.

The protein belongs to the GHMP kinase family. Homoserine kinase subfamily.

It localises to the cytoplasm. The enzyme catalyses L-homoserine + ATP = O-phospho-L-homoserine + ADP + H(+). The protein operates within amino-acid biosynthesis; L-threonine biosynthesis; L-threonine from L-aspartate: step 4/5. Functionally, catalyzes the ATP-dependent phosphorylation of L-homoserine to L-homoserine phosphate. The sequence is that of Homoserine kinase from Aliivibrio salmonicida (strain LFI1238) (Vibrio salmonicida (strain LFI1238)).